The primary structure comprises 248 residues: MSEAAQTLDGWYCLHDFRSIDWSAWKTLTSDEREAAIREFLSLVEKWQETEDKQEGSHAIYTIVGQKADIMFMILRPTIEELNEIETALNKTKLAEFLVPAYSYVSVVELSNYLASGDEDPYQIPEVRRRLYPILPKTKHVCFYPMDKRRQGNDNWYMLSMEERRNLMRAHGLTGRKYAGKVTQIITGSVGLDDFEWGVTLFSDDALQFKKLVYEMRFDEVSARYGEFGSFFVGNRLTVEKVPVFLHV.

Fe-coproporphyrin III is bound by residues arginine 130, 144-148, histidine 171, glutamine 184, and serine 222; that span reads YPMDK. Tyrosine 144 is a catalytic residue.

The protein belongs to the ChdC family. Type 1 subfamily. Fe-coproporphyrin III is required as a cofactor.

It carries out the reaction Fe-coproporphyrin III + 2 H2O2 + 2 H(+) = heme b + 2 CO2 + 4 H2O. It catalyses the reaction Fe-coproporphyrin III + H2O2 + H(+) = harderoheme III + CO2 + 2 H2O. The enzyme catalyses harderoheme III + H2O2 + H(+) = heme b + CO2 + 2 H2O. The protein operates within porphyrin-containing compound metabolism; protoheme biosynthesis. In terms of biological role, involved in coproporphyrin-dependent heme b biosynthesis. Catalyzes the decarboxylation of Fe-coproporphyrin III (coproheme) to heme b (protoheme IX), the last step of the pathway. The reaction occurs in a stepwise manner with a three-propionate intermediate. The chain is Coproheme decarboxylase from Geobacillus sp. (strain WCH70).